The following is a 160-amino-acid chain: SsrA-binding protein (160 aa).

The tract at residues 134-160 (RKAHDKREAVKERDWNRDKARLMRDRG) is disordered. Positions 138-160 (DKREAVKERDWNRDKARLMRDRG) are enriched in basic and acidic residues.

Belongs to the SmpB family.

Its subcellular location is the cytoplasm. Required for rescue of stalled ribosomes mediated by trans-translation. Binds to transfer-messenger RNA (tmRNA), required for stable association of tmRNA with ribosomes. tmRNA and SmpB together mimic tRNA shape, replacing the anticodon stem-loop with SmpB. tmRNA is encoded by the ssrA gene; the 2 termini fold to resemble tRNA(Ala) and it encodes a 'tag peptide', a short internal open reading frame. During trans-translation Ala-aminoacylated tmRNA acts like a tRNA, entering the A-site of stalled ribosomes, displacing the stalled mRNA. The ribosome then switches to translate the ORF on the tmRNA; the nascent peptide is terminated with the 'tag peptide' encoded by the tmRNA and targeted for degradation. The ribosome is freed to recommence translation, which seems to be the essential function of trans-translation. The sequence is that of SsrA-binding protein from Azorhizobium caulinodans (strain ATCC 43989 / DSM 5975 / JCM 20966 / LMG 6465 / NBRC 14845 / NCIMB 13405 / ORS 571).